Reading from the N-terminus, the 158-residue chain is Phosphopantetheine adenylyltransferase (158 aa).

Threonine 10 serves as a coordination point for substrate. Residues 10-11 (TF) and histidine 18 contribute to the ATP site. Substrate contacts are provided by lysine 42, leucine 74, and arginine 88. ATP contacts are provided by residues 89–91 (GLR), glutamate 99, and 124–130 (NSFISST).

It belongs to the bacterial CoaD family. As to quaternary structure, homohexamer. Requires Mg(2+) as cofactor.

Its subcellular location is the cytoplasm. The enzyme catalyses (R)-4'-phosphopantetheine + ATP + H(+) = 3'-dephospho-CoA + diphosphate. The protein operates within cofactor biosynthesis; coenzyme A biosynthesis; CoA from (R)-pantothenate: step 4/5. Its function is as follows. Reversibly transfers an adenylyl group from ATP to 4'-phosphopantetheine, yielding dephospho-CoA (dPCoA) and pyrophosphate. The chain is Phosphopantetheine adenylyltransferase from Shewanella loihica (strain ATCC BAA-1088 / PV-4).